Consider the following 1269-residue polypeptide: Phospholipase D A (1269 aa).

Polar residues predominate over residues 55 to 64; that stretch reads YTSVGSAPTT. The segment at 55-121 is disordered; it reads YTSVGSAPTT…NNNLQSPTQS (67 aa). Composition is skewed to low complexity over residues 65-87 and 95-114; these read NNNS…SGSS and NSNK…NNNN. Residues 131 to 192 adopt a coiled-coil conformation; it reads SKALHDFEEK…ELKSLDELLH (62 aa). The segment covering 222–232 has biased composition (polar residues); sequence NSVTNNTPSSA. Disordered regions lie at residues 222–269 and 300–320; these read NSVT…SSST and NSYP…DPNL. Over residues 233–269 the composition is skewed to low complexity; it reads TPLTLSNNNNYTSSSLATSPTTNSSSSSSSSSSSSST. PLD phosphodiesterase domains lie at 435-462 and 704-731; these read IYWS…CFGR and EQIY…NDRS. Catalysis depends on residues His440, Lys442, Asp447, His709, Lys711, and Asp716. Positions 803-835 form a coiled coil; sequence NNNNNSNINNNINNNNNEINNNNNNNNNNNSNE. Low complexity-rich tracts occupy residues 810–850, 859–906, and 934–943; these read INNN…NSNS, NLPP…GTTN, and SSPQDSPQDS. Disordered regions lie at residues 810-966 and 983-1007; these read INNN…HQSP and SNEQ…TTTD. Residues 987–1003 show a composition bias toward pro residues; it reads LPPPPSSTTPPPPPPPL. Residues 1059-1096 adopt a coiled-coil conformation; it reads TTAQQQQQQQQQQQQQQQQQQQQQQQQQQQQQQQQQQQ. A disordered region spans residues 1116–1167; the sequence is IKKKRSSISPSTSSNKLLLSGNGSGDSIRVVTDSGSSPRGQPRSMSSLHDHA. Residues 1122–1142 are compositionally biased toward low complexity; it reads SISPSTSSNKLLLSGNGSGDS. The segment covering 1148 to 1162 has biased composition (polar residues); it reads DSGSSPRGQPRSMSS.

It belongs to the phospholipase D family.

The catalysed reaction is a 1,2-diacyl-sn-glycero-3-phosphocholine + H2O = a 1,2-diacyl-sn-glycero-3-phosphate + choline + H(+). Its activity is regulated as follows. Inhibited by butan-1-ol. In terms of biological role, plays a role in cell growth. Hydrolyzes membrane phospholipids, such as PtdCho free headgroup and PtdOH (phosphatidic acid; signaling molecule on its own). Involved in the inhibition of actin-based motility and endocytosis. Its inhibition causes complete collapse of F-actin organization. The protein is Phospholipase D A (pldA) of Dictyostelium discoideum (Social amoeba).